The chain runs to 335 residues: RNA 3'-terminal phosphate cyclase (335 aa).

ATP is bound by residues glutamine 101 and 282-285; that span reads HMGD. Histidine 306 (tele-AMP-histidine intermediate) is an active-site residue.

This sequence belongs to the RNA 3'-terminal cyclase family. Type 1 subfamily.

It is found in the cytoplasm. The enzyme catalyses a 3'-end 3'-phospho-ribonucleotide-RNA + ATP = a 3'-end 2',3'-cyclophospho-ribonucleotide-RNA + AMP + diphosphate. Its function is as follows. Catalyzes the conversion of 3'-phosphate to a 2',3'-cyclic phosphodiester at the end of RNA. The mechanism of action of the enzyme occurs in 3 steps: (A) adenylation of the enzyme by ATP; (B) transfer of adenylate to an RNA-N3'P to produce RNA-N3'PP5'A; (C) and attack of the adjacent 2'-hydroxyl on the 3'-phosphorus in the diester linkage to produce the cyclic end product. The biological role of this enzyme is unknown but it is likely to function in some aspects of cellular RNA processing. In Sulfolobus acidocaldarius (strain ATCC 33909 / DSM 639 / JCM 8929 / NBRC 15157 / NCIMB 11770), this protein is RNA 3'-terminal phosphate cyclase.